An 885-amino-acid polypeptide reads, in one-letter code: Alpha-actinin (885 aa).

Residues 1 to 242 (MTQDGYMQQE…IMTYVSWYYH (242 aa)) form an actin-binding region. Calponin-homology (CH) domains follow at residues 26–130 (KQQR…LRFA) and 139–245 (MTAK…HAFH). 4 Spectrin repeats span residues 270-377 (LMEE…EEWL), 389-494 (HLAQ…ALDE), 508-614 (EFAK…HTLQ), and 626-727 (LRRQ…NEVE). EF-hand domains are found at residues 741 to 776 (EQLN…LGYN) and 780 to 815 (DDRP…EYTD). Asp-754, Thr-758, Arg-760, Glu-765, Asp-793, Asn-795, Thr-797, and Tyr-799 together coordinate Ca(2+).

It belongs to the alpha-actinin family. In terms of assembly, homodimer; antiparallel.

Functionally, F-actin cross-linking protein which is thought to anchor actin to a variety of intracellular structures. This is a bundling protein. This chain is Alpha-actinin, found in Dermatophagoides farinae (American house dust mite).